Reading from the N-terminus, the 1456-residue chain is CLIP-associating protein 1-B (1456 aa).

HEAT repeat units lie at residues 68–87 (LLGM…RFRT), 88–124 (QIGT…QASN), and 163–200 (LTLS…HVGE). The disordered stretch occupies residues 237 to 296 (TDKNFDDEDSVDGNRPSSASSSASSKAPQTARRGVSLGTGRRPGTSSAAPKTGGTAKEGA). Over residues 284–296 (AAPKTGGTAKEGA) the composition is skewed to low complexity. The HEAT 4 repeat unit spans residues 442 to 479 (THVPRLIPIITSNCTSKSVAVRRRCYEFLDLLLQEWQT). Disordered stretches follow at residues 547–728 (SIVS…DRFG) and 776–796 (GMYS…ERSY). The span at 550–569 (SLPQSDRSSSSSQESLNRPL) shows a compositional bias: low complexity. The span at 573–594 (RSPTGSTVSRATSKSTTGSLQR) shows a compositional bias: polar residues. Low complexity-rich tracts occupy residues 603–618 (AAAT…ASTA), 642–656 (QSSG…TPAD), and 665–679 (VVSQ…SSPG). Polar residues predominate over residues 711-721 (QGCSRETSPSR). Low complexity predominate over residues 785 to 796 (SDASSACSERSY). The HEAT 5 repeat unit spans residues 930–967 (QQFNILMRFIVDQTQTPNLKVKVAILKYIESLARQMDP). 2 disordered regions span residues 1037–1080 (LKNS…GLSP) and 1121–1147 (VRRD…DLRG). Residues 1038-1050 (KNSSNSSMGSPSN) are compositionally biased toward low complexity. Polar residues predominate over residues 1062–1074 (SRASPLTSPTNCS). The segment covering 1121–1130 (VRRDGKKESE) has biased composition (basic and acidic residues). 2 HEAT repeats span residues 1260-1297 (EHFK…NQPA) and 1378-1415 (QILP…VIGE).

It belongs to the CLASP family. In terms of assembly, interacts (via C-terminus) with clip1/clip-170, and cenpe.

The protein localises to the cytoplasm. The protein resides in the cytoskeleton. It localises to the microtubule organizing center. It is found in the centrosome. Its subcellular location is the chromosome. The protein localises to the centromere. The protein resides in the kinetochore. It localises to the spindle. It is found in the golgi apparatus. Its subcellular location is the trans-Golgi network. In terms of biological role, microtubule plus-end tracking protein that promotes the stabilization of dynamic microtubules during anaphase. Plays a crucial role in chromatin-induced microtubule formation. May also act at microtubule minus ends. May be involved in the nucleation of noncentrosomal microtubules originating from the trans-Golgi network (TGN). This Xenopus laevis (African clawed frog) protein is CLIP-associating protein 1-B.